A 64-amino-acid chain; its full sequence is MAKKDQLTLRGPLYGNNRSHSKTITRRKWNVNLQSCKIKDTNGKVTRILVSTKTIRTLKKQNRF.

Positions 1-21 (MAKKDQLTLRGPLYGNNRSHS) are disordered.

Belongs to the bacterial ribosomal protein bL28 family.

The polypeptide is Large ribosomal subunit protein bL28 (Mycoplasma genitalium (strain ATCC 33530 / DSM 19775 / NCTC 10195 / G37) (Mycoplasmoides genitalium)).